A 375-amino-acid polypeptide reads, in one-letter code: Stimulator of interferon genes protein 2 (375 aa).

4 helical membrane passes run 30 to 50 (TATV…LLAV), 60 to 80 (IHFL…GELV), 114 to 134 (AGSI…VLYE), and 144 to 164 (YPIL…LVGL). 2',3'-cGAMP is bound by residues Tyr195, Arg256, and Arg262.

Belongs to the STING family.

It localises to the membrane. Its function is as follows. Facilitator of innate immune signaling that acts as a sensor of second messenger signals produced by cyclic GMP-AMP synthase-like receptors (cGLRs) and promotes the production of type I interferon. Innate immune response is triggered in response to nucleotides from viruses and bacteria delivered to the cytoplasm. Acts by binding cyclic dinucleotides: recognizes and binds 2'-3' linked cGAMP (2'-3'-cGAMP), a second messengers produced by cGLRs in response to nucleotides in the cytosol, such as double-stranded RNA (dsRNA). Upon binding to 2'-3'-cGAMP, oligomerizes and promotes the recruitment and subsequent activation of the transcription factor IRF3 to induce expression of type I interferon. The protein is Stimulator of interferon genes protein 2 of Stylophora pistillata (Smooth cauliflower coral).